We begin with the raw amino-acid sequence, 388 residues long: P2X receptor E (388 aa).

At M1–G28 the chain is on the cytoplasmic side. Residues I29–L49 form a helical membrane-spanning segment. Residues Q50–M312 are Lumenal-facing. Residues R291–L304 are pore-forming motif. A helical transmembrane segment spans residues L313 to I333. Residues A334 to K388 are Cytoplasmic-facing. The disordered stretch occupies residues F349–K388. 2 stretches are compositionally biased toward polar residues: residues Q350 to H365 and N377 to K388.

The protein belongs to the P2X receptor family.

Its subcellular location is the contractile vacuole membrane. P2X receptors are ATP-gated ion channels that play a role in intracellular calcium signaling. Not required for the purinergic response to extracellular nucleotides. Not essential for osmoregulation. Inward currents evoked by intracellular ATP. ATP analog beta, gamma-imido-ATP is a weak partial agonist of p2xE. Exclusively selective for ATP over other nucleotides. Insensitive to copper and P2 receptor antagonists PPADS and suramin but strongly inhibited by sodium ions. More permeable to ammonium than either sodium or potassium ions and less permeable to choline. Permeable to calcium ions, but not chloride. The protein is P2X receptor E (p2xE) of Dictyostelium discoideum (Social amoeba).